The sequence spans 147 residues: MPTYAPKAGDTTRSWYVIDATDVVLGRLAVAAANLLRGKHKPTFAPNVDGGDFVIVINADKVAISGDKLQHKMVYRHSGYPGGLHKRTIGELMQRHPDRVVEKAILGMLPKNRLSRQIQRKLRVYAGPEHPHSAQQPVPYELKQVAQ.

The interval 128–147 (PEHPHSAQQPVPYELKQVAQ) is disordered.

The protein belongs to the universal ribosomal protein uL13 family. As to quaternary structure, part of the 50S ribosomal subunit.

In terms of biological role, this protein is one of the early assembly proteins of the 50S ribosomal subunit, although it is not seen to bind rRNA by itself. It is important during the early stages of 50S assembly. The sequence is that of Large ribosomal subunit protein uL13 from Mycobacterium bovis (strain BCG / Pasteur 1173P2).